Reading from the N-terminus, the 790-residue chain is MRMLRWLILSAFSVAGAVQAQGNQDSAAASAPSASIGAPVLRTSPGLRVHRLPDEKIPAFMEADQISGDPDSEVTLTGNAQVRRVDGIIKGDRINYRRDTGDVDVQGSARMLRDGTLITGPSARLNVDTYSGEIQEPNFWIGASGGTAQARHADIFSKSQMRLSQVTYSGCPCPKPSWYIKADTVDLDFDENEGVARNGVLYFKDVPILASPYLTFPVKKERKSGFLMPTYGTTSNSGFDISLPYYFNLAPNYDLTLVPRYLSKRGAQLGGEFRYLGSGYRGVAIGTYLPDDNETGRDRWMYRTYHRQLLGNGFYTDWDIAGASDDNYFRDISELGLNTASTTYLPRRGRVGWSSTYWQTYAQVYKYQTLQDPDAPLAPPYDKVPELWLKGARYDWGGFDAEWVSTAVRFQRSLLNGRRLGPDGDRLQTYPTVSYPIGRPGWFLVPKVGVHYTQYRTDWYNRDWNRIGLSNYKRTESRTVPIMSLDAGMIFERDASLFGKAATQTLEPRLYYLRVPYRDQSALPVYDTTLADFSFDQAFQENIYTGGWDRIANANQLTAALTTRWLDANTGFERLSLSAAQRIYFQDQEVTLPAEQPRKNVRSDFLVGATAALTDTLITDVAAQYNPYDNKWSRGMVSARWSPQRLTTVAVAYRYQRDPLPGISYQPQGQNQVSLAVQWPIHRRWYGVGRVDYSLRSEPATAAAAEQSPRVTQAIAGLEYKGDCCWVGRVVYQRYAVSAADTNTALFFQLELTGLGALGTDPISLLNRSIPGYQSVVPPTPTGTTFERYE.

A signal peptide spans 1 to 20; the sequence is MRMLRWLILSAFSVAGAVQA.

This sequence belongs to the LptD family. In terms of assembly, component of the lipopolysaccharide transport and assembly complex. Interacts with LptE and LptA.

The protein localises to the cell outer membrane. In terms of biological role, together with LptE, is involved in the assembly of lipopolysaccharide (LPS) at the surface of the outer membrane. The chain is LPS-assembly protein LptD from Bordetella pertussis (strain Tohama I / ATCC BAA-589 / NCTC 13251).